A 419-amino-acid polypeptide reads, in one-letter code: E3 ubiquitin-protein ligase RNFT1 (419 aa).

Residues 1–120 (MKLRAQFDRG…SGESDLESGE (120 aa)) form a disordered region. Polar residues-rich tracts occupy residues 31–44 (EPSS…SLTL) and 72–82 (GSSSGSTNGRG). Residues 84-102 (TSRRMRTASHSHSHTHGHG) show a composition bias toward basic residues. Helical transmembrane passes span 141–161 (FIVI…AVAV), 187–207 (LHCA…FYTF), 217–237 (FFAN…SVGV), 240–260 (FILK…PCPL), 270–290 (YMLI…PLWF), and 303–323 (VGLT…LLAL). Residues 352-403 (IREAGDICPICQADFKQPRVLVCQHIFCEECIAQWLNQERTCPLCRTVITDK) are required for ubiquitin ligase activity and for protection against ER stress-induced cell death. Residues 359 to 397 (CPICQADFKQPRVLVCQHIFCEECIAQWLNQERTCPLCR) form an RING-type zinc finger.

Its subcellular location is the endoplasmic reticulum membrane. It carries out the reaction S-ubiquitinyl-[E2 ubiquitin-conjugating enzyme]-L-cysteine + [acceptor protein]-L-lysine = [E2 ubiquitin-conjugating enzyme]-L-cysteine + N(6)-ubiquitinyl-[acceptor protein]-L-lysine.. It functions in the pathway protein modification; protein ubiquitination. Its function is as follows. E3 ubiquitin-protein ligase that acts in the endoplasmic reticulum (ER)-associated degradation (ERAD) pathway, which targets misfolded proteins that accumulate in the endoplasmic reticulum (ER) for ubiquitination and subsequent proteasome-mediated degradation. Protects cells from ER stress-induced apoptosis. The polypeptide is E3 ubiquitin-protein ligase RNFT1 (rnft1) (Danio rerio (Zebrafish)).